Consider the following 673-residue polypeptide: Methionine--tRNA ligase (673 aa).

Positions 13-23 (PYANGSIHLGH) match the 'HIGH' region motif. Residues C144, C147, C157, and C160 each contribute to the Zn(2+) site. The 'KMSKS' region signature appears at 330-334 (KMSKS). K333 contributes to the ATP binding site. The tRNA-binding domain maps to 572 to 673 (DFAQLDLRIA…GRARAGMTIS (102 aa)).

It belongs to the class-I aminoacyl-tRNA synthetase family. MetG type 1 subfamily. Homodimer. Requires Zn(2+) as cofactor.

The protein localises to the cytoplasm. The enzyme catalyses tRNA(Met) + L-methionine + ATP = L-methionyl-tRNA(Met) + AMP + diphosphate. Functionally, is required not only for elongation of protein synthesis but also for the initiation of all mRNA translation through initiator tRNA(fMet) aminoacylation. This chain is Methionine--tRNA ligase, found in Dichelobacter nodosus (strain VCS1703A).